The following is a 350-amino-acid chain: Protein MGF 360-12L (350 aa).

The ANK repeat unit spans residues Asp-57 to Val-89.

Belongs to the asfivirus MGF 360 family.

Plays a role in virus cell tropism, and may be required for efficient virus replication in macrophages. This chain is Protein MGF 360-12L, found in African swine fever virus (isolate Warthog/Namibia/Wart80/1980) (ASFV).